Here is a 92-residue protein sequence, read N- to C-terminus: Small ribosomal subunit protein uS19 (92 aa).

It belongs to the universal ribosomal protein uS19 family.

Protein S19 forms a complex with S13 that binds strongly to the 16S ribosomal RNA. In Sodalis glossinidius (strain morsitans), this protein is Small ribosomal subunit protein uS19.